The primary structure comprises 299 residues: Pectin lyase (299 aa).

The N-terminal stretch at Met-1–Ala-18 is a signal peptide. 2 stretches are compositionally biased toward low complexity: residues Arg-82–Asp-91 and Ser-232–Thr-246. Disordered stretches follow at residues Arg-82–Ser-105 and Ser-227–Thr-246.

It belongs to the polysaccharide lyase 1 family.

It localises to the secreted. It catalyses the reaction Eliminative cleavage of (1-&gt;4)-alpha-D-galacturonan methyl ester to give oligosaccharides with 4-deoxy-6-O-methyl-alpha-D-galact-4-enuronosyl groups at their non-reducing ends.. This Peyronellaea pinodes (Pea foot rot fungus) protein is Pectin lyase (PELA).